A 276-amino-acid chain; its full sequence is Rhomboid protease GlpG (276 aa).

6 helical membrane passes run 94-114 (GPVT…MQIL), 142-162 (ALMH…WYLG), 169-189 (LGSG…GYVQ), 192-212 (FSGP…GYVW), 229-249 (LIIF…GMSM), and 250-270 (ANGA…VDSL). The Nucleophile role is filled by S201. The active site involves H254.

It belongs to the peptidase S54 family.

The protein resides in the cell inner membrane. It catalyses the reaction Cleaves type-1 transmembrane domains using a catalytic dyad composed of serine and histidine that are contributed by different transmembrane domains.. Its function is as follows. Rhomboid-type serine protease that catalyzes intramembrane proteolysis. This is Rhomboid protease GlpG from Escherichia coli O157:H7.